A 798-amino-acid chain; its full sequence is Penicillin-binding protein 1A (798 aa).

Over 1–9 the chain is Cytoplasmic; it reads MIKKILTTC. A helical; Signal-anchor for type II membrane protein transmembrane segment spans residues 10–30; it reads FGLVFGFCVFGVGLVAIAILV. Topologically, residues 31–798 are periplasmic; it reads TYPKLPSLDS…SKQQQLDSLF (768 aa). Positions 50–218 are transglycosylase; sequence LTIYSADGEV…SAYNPIVNPE (169 aa). The Proton donor; for transglycosylase activity role is filled by glutamate 88. The segment at 378-700 is transpeptidase; the sequence is RRALGFAARA…GTIAVPVWVD (323 aa). The active-site Acyl-ester intermediate; for transpeptidase activity is the serine 461. Residues 738–798 are disordered; the sequence is GLTLDNSGIA…SKQQQLDSLF (61 aa). Residues 768–777 are compositionally biased toward basic and acidic residues; that stretch reads AADDEVRQDM. The span at 783–798 shows a compositional bias: polar residues; sequence LPSNTGSKQQQLDSLF.

This sequence in the N-terminal section; belongs to the glycosyltransferase 51 family. The protein in the C-terminal section; belongs to the transpeptidase family.

It is found in the cell inner membrane. The catalysed reaction is [GlcNAc-(1-&gt;4)-Mur2Ac(oyl-L-Ala-gamma-D-Glu-L-Lys-D-Ala-D-Ala)](n)-di-trans,octa-cis-undecaprenyl diphosphate + beta-D-GlcNAc-(1-&gt;4)-Mur2Ac(oyl-L-Ala-gamma-D-Glu-L-Lys-D-Ala-D-Ala)-di-trans,octa-cis-undecaprenyl diphosphate = [GlcNAc-(1-&gt;4)-Mur2Ac(oyl-L-Ala-gamma-D-Glu-L-Lys-D-Ala-D-Ala)](n+1)-di-trans,octa-cis-undecaprenyl diphosphate + di-trans,octa-cis-undecaprenyl diphosphate + H(+). It carries out the reaction Preferential cleavage: (Ac)2-L-Lys-D-Ala-|-D-Ala. Also transpeptidation of peptidyl-alanyl moieties that are N-acyl substituents of D-alanine.. It participates in cell wall biogenesis; peptidoglycan biosynthesis. Cell wall formation. Synthesis of cross-linked peptidoglycan from the lipid intermediates. The enzyme has a penicillin-insensitive transglycosylase N-terminal domain (formation of linear glycan strands) and a penicillin-sensitive transpeptidase C-terminal domain (cross-linking of the peptide subunits). This is Penicillin-binding protein 1A (mrcA) from Neisseria meningitidis serogroup A / serotype 4A (strain DSM 15465 / Z2491).